Consider the following 254-residue polypeptide: 3-deoxy-manno-octulosonate cytidylyltransferase (254 aa).

The protein belongs to the KdsB family.

Its subcellular location is the cytoplasm. It carries out the reaction 3-deoxy-alpha-D-manno-oct-2-ulosonate + CTP = CMP-3-deoxy-beta-D-manno-octulosonate + diphosphate. The protein operates within nucleotide-sugar biosynthesis; CMP-3-deoxy-D-manno-octulosonate biosynthesis; CMP-3-deoxy-D-manno-octulosonate from 3-deoxy-D-manno-octulosonate and CTP: step 1/1. Its pathway is bacterial outer membrane biogenesis; lipopolysaccharide biosynthesis. Its function is as follows. Activates KDO (a required 8-carbon sugar) for incorporation into bacterial lipopolysaccharide in Gram-negative bacteria. The chain is 3-deoxy-manno-octulosonate cytidylyltransferase from Tolumonas auensis (strain DSM 9187 / NBRC 110442 / TA 4).